The chain runs to 386 residues: D-amino-acid oxidase (386 aa).

Residues G14, G15, V16, V17, E39, R40, A51, G52, and G53 each coordinate FAD. A disordered region spans residues 109 to 138 (SSSPPHPLLPPWVDPSASAAPPRELGTPDT). Residues 112–121 (PPHPLLPPWV) show a composition bias toward pro residues. FAD contacts are provided by R174, V175, and A176. D-serine-binding residues include Y253, Y261, and K332. D-proline-binding residues include Y261 and K332. Residues K332, G344, I345, G362, and A364 each coordinate FAD. A D-dopa-binding site is contributed by K332. G362 contacts D-serine. G362 provides a ligand contact to D-proline. Residue G362 coordinates D-dopa.

It belongs to the DAMOX/DASOX family.

The catalysed reaction is a D-alpha-amino acid + O2 + H2O = a 2-oxocarboxylate + H2O2 + NH4(+). It catalyses the reaction D-alanine + O2 + H2O = pyruvate + H2O2 + NH4(+). It carries out the reaction D-aspartate + O2 + H2O = oxaloacetate + H2O2 + NH4(+). Functionally, catalyzes the oxidative deamination of D-amino acids with broad substrate specificity. Enables the organism to utilize D-amino acids as a source of nutrients. The chain is D-amino-acid oxidase from Zea mays (Maize).